A 266-amino-acid polypeptide reads, in one-letter code: Pyridoxal phosphate phosphatase YigL (266 aa).

The active-site Nucleophile is the aspartate 8. Aspartate 8 provides a ligand contact to Mg(2+). Phosphate is bound at residue leucine 9. Aspartate 10 is a Mg(2+) binding site. Phosphate contacts are provided by residues threonine 42–glycine 43 and lysine 191. Mg(2+) is bound at residue aspartate 214. Asparagine 217 is a phosphate binding site.

The protein belongs to the HAD-like hydrolase superfamily. Cof family. Requires Mg(2+) as cofactor. The cofactor is Mn(2+). It depends on Co(2+) as a cofactor. Zn(2+) is required as a cofactor.

It carries out the reaction pyridoxal 5'-phosphate + H2O = pyridoxal + phosphate. It catalyses the reaction sugar phosphate + H2O = sugar + phosphate.. In terms of biological role, catalyzes Strongly the dephosphorylation of pyridoxal-phosphate (PLP) and moderately the dephosphorylation of 2-deoxyglucose 6-phosphate (2bGLU6P) and beta-glucose 6-phosphate (bGlu6P). Also hydrolyzes both purines (GMP and IMP) and pyrimidines as secondary substrates. This is Pyridoxal phosphate phosphatase YigL (yigL) from Escherichia coli (strain K12).